The sequence spans 77 residues: uncharacterized protein (77 aa).

A helical membrane pass occupies residues 57–76; the sequence is NSAVICTLIANLMAFFMLLT.

It is found in the membrane. This is an uncharacterized protein from Schizosaccharomyces pombe (strain 972 / ATCC 24843) (Fission yeast).